Here is a 315-residue protein sequence, read N- to C-terminus: Lipoyl synthase (315 aa).

Cys62, Cys67, Cys73, Cys88, Cys92, Cys95, and Ser302 together coordinate [4Fe-4S] cluster. Residues 74 to 292 (FNHGTATFMI…KIALKLGFIR (219 aa)) enclose the Radical SAM core domain.

This sequence belongs to the radical SAM superfamily. Lipoyl synthase family. [4Fe-4S] cluster is required as a cofactor.

Its subcellular location is the cytoplasm. The catalysed reaction is [[Fe-S] cluster scaffold protein carrying a second [4Fe-4S](2+) cluster] + N(6)-octanoyl-L-lysyl-[protein] + 2 oxidized [2Fe-2S]-[ferredoxin] + 2 S-adenosyl-L-methionine + 4 H(+) = [[Fe-S] cluster scaffold protein] + N(6)-[(R)-dihydrolipoyl]-L-lysyl-[protein] + 4 Fe(3+) + 2 hydrogen sulfide + 2 5'-deoxyadenosine + 2 L-methionine + 2 reduced [2Fe-2S]-[ferredoxin]. It participates in protein modification; protein lipoylation via endogenous pathway; protein N(6)-(lipoyl)lysine from octanoyl-[acyl-carrier-protein]: step 2/2. Its function is as follows. Catalyzes the radical-mediated insertion of two sulfur atoms into the C-6 and C-8 positions of the octanoyl moiety bound to the lipoyl domains of lipoate-dependent enzymes, thereby converting the octanoylated domains into lipoylated derivatives. This Vesicomyosocius okutanii subsp. Calyptogena okutanii (strain HA) protein is Lipoyl synthase.